The sequence spans 176 residues: Cytochrome b (176 aa).

Helical transmembrane passes span 33–53 (FGSL…FLAM), 77–98 (WLLR…YLHV), and 113–133 (WNVG…GYVL). 2 residues coordinate heme b: H83 and H97.

It belongs to the cytochrome b family. As to quaternary structure, the cytochrome bc1 complex contains 11 subunits: 3 respiratory subunits (MT-CYB, CYC1 and UQCRFS1), 2 core proteins (UQCRC1 and UQCRC2) and 6 low-molecular weight proteins (UQCRH/QCR6, UQCRB/QCR7, UQCRQ/QCR8, UQCR10/QCR9, UQCR11/QCR10 and a cleavage product of UQCRFS1). This cytochrome bc1 complex then forms a dimer. It depends on heme b as a cofactor.

Its subcellular location is the mitochondrion inner membrane. In terms of biological role, component of the ubiquinol-cytochrome c reductase complex (complex III or cytochrome b-c1 complex) that is part of the mitochondrial respiratory chain. The b-c1 complex mediates electron transfer from ubiquinol to cytochrome c. Contributes to the generation of a proton gradient across the mitochondrial membrane that is then used for ATP synthesis. The protein is Cytochrome b (MT-CYB) of Tadarida brasiliensis (Brazilian free-tailed bat).